We begin with the raw amino-acid sequence, 160 residues long: Transcription antitermination protein NusB (160 aa).

It belongs to the NusB family.

Functionally, involved in transcription antitermination. Required for transcription of ribosomal RNA (rRNA) genes. Binds specifically to the boxA antiterminator sequence of the ribosomal RNA (rrn) operons. In Chlamydia pneumoniae (Chlamydophila pneumoniae), this protein is Transcription antitermination protein NusB.